We begin with the raw amino-acid sequence, 109 residues long: MTMKKLLIIILPVLLSGCSAFNQLVERMQTDTLEYQCDEKPLTVKLNNPRQEVSFVYDNQLLHLKQGISASGARYTDGIYVFWSKGDEATVYKRDRIVLNNCQLQNPQR.

Residues 1–17 (MTMKKLLIIILPVLLSG) form the signal peptide. Cys18 carries N-palmitoyl cysteine lipidation. Cys18 is lipidated: S-diacylglycerol cysteine. Cys37 and Cys102 are disulfide-bonded.

The protein belongs to the MliC family. Type 1 subfamily. In terms of assembly, monomer.

The protein localises to the cell outer membrane. Specifically inhibits C-type lysozymes. This Escherichia coli (strain K12) protein is Membrane-bound lysozyme inhibitor of C-type lysozyme.